Reading from the N-terminus, the 380-residue chain is Putative glutamate--cysteine ligase 2-2 (380 aa).

It belongs to the glutamate--cysteine ligase type 2 family. YbdK subfamily.

It catalyses the reaction L-cysteine + L-glutamate + ATP = gamma-L-glutamyl-L-cysteine + ADP + phosphate + H(+). Functionally, ATP-dependent carboxylate-amine ligase which exhibits weak glutamate--cysteine ligase activity. The chain is Putative glutamate--cysteine ligase 2-2 from Nocardia farcinica (strain IFM 10152).